A 276-amino-acid chain; its full sequence is uncharacterized protein (276 aa).

15 to 22 (GKGGVGKS) is a binding site for ATP. 4Fe-4S ferredoxin-type domains lie at 68-96 (EIYE…DFKI) and 92-121 (GDFK…PIKR). Positions 76, 79, 82, 86, 101, 104, 107, and 111 each coordinate [4Fe-4S] cluster.

This is an uncharacterized protein from Methanocaldococcus jannaschii (strain ATCC 43067 / DSM 2661 / JAL-1 / JCM 10045 / NBRC 100440) (Methanococcus jannaschii).